The primary structure comprises 389 residues: Calreticulin (389 aa).

The N-terminal stretch at 1 to 13 (MFTLFLLIALSSA) is a signal peptide. Residues 12 to 189 (SAKVYFHETF…GVEKQEGKFD (178 aa)) form an N-domain region. Residues threonine 20, asparagine 52, and asparagine 53 each coordinate Ca(2+). The cysteines at positions 96 and 130 are disulfide-linked. An alpha-D-glucoside is bound by residues tyrosine 100, lysine 102, tyrosine 121, and aspartate 128. 7 tandem repeats follow at residues 183–194 (KQEGKFDEDWDM), 202–213 (DPNVSKPADWVD), 219–230 (DPNDKKPEGWDD), 237–248 (DPNAKKPEEWND), 252–262 (GEWEAPTIENP), 266–276 (GEWKPKRIPNP), and 280–290 (GEWVHPQIANP). Positions 183-248 (KQEGKFDEDW…NAKKPEEWND (66 aa)) are 4 X approximate repeats. A P-domain region spans residues 190–301 (EDWDMLAPKE…YVYDPELYKY (112 aa)). Positions 213–232 (DEKEIDDPNDKKPEGWDDIP) are enriched in basic and acidic residues. Positions 213 to 256 (DEKEIDDPNDKKPEGWDDIPKTIVDPNAKKPEEWNDEDDGEWEA) are disordered. The 3 X approximate repeats stretch occupies residues 252–290 (GEWEAPTIENPEYKGEWKPKRIPNPAYKGEWVHPQIANP). A C-domain region spans residues 302–389 (DSFAYIGIDV…IKKEENKEEL (88 aa)). Aspartate 310 contacts an alpha-D-glucoside. Ca(2+) is bound at residue aspartate 321. Residues 329–388 (IEEAEKEAKVILERNAAEKKMRDEIKEAEKQKEEEAKKEAEKQKEEETKEEIKKEENKEE) are a coiled coil. The segment at 347–389 (KKMRDEIKEAEKQKEEEAKKEAEKQKEEETKEEIKKEENKEEL) is disordered. Positions 386 to 389 (KEEL) match the Prevents secretion from ER motif.

The protein belongs to the calreticulin family. Interacts (via C-terminus) with host C1q.

The protein resides in the endoplasmic reticulum lumen. It is found in the cell projection. The protein localises to the uropodium. Its subcellular location is the cell surface. It localises to the phagocytic cup. In terms of biological role, molecular calcium-binding chaperone promoting folding, oligomeric assembly and quality control in the ER via the calreticulin/calnexin cycle. This lectin may interact transiently with almost all of the monoglucosylated glycoproteins that are synthesized in the ER. Plays a role in host cell phagocytosis, possibly by acting as a receptor for host C1q. Binding to C1q prevents the activation of the host classical complement pathway. Also, binds to apoptotic host cells independently of host C1q and collectins. This is Calreticulin from Entamoeba histolytica (strain ATCC 30459 / HM-1:IMSS / ABRM).